Consider the following 152-residue polypeptide: Large ribosomal subunit protein bL9 (152 aa).

It belongs to the bacterial ribosomal protein bL9 family.

Functionally, binds to the 23S rRNA. The protein is Large ribosomal subunit protein bL9 of Mycobacterium avium (strain 104).